A 543-amino-acid chain; its full sequence is T-complex protein 1 subunit gamma (543 aa).

Belongs to the TCP-1 chaperonin family.

The protein localises to the cytoplasm. In terms of biological role, molecular chaperone; assists the folding of proteins upon ATP hydrolysis. Known to play a role, in vitro, in the folding of actin and tubulin. Plays a role in microtubule polymerization. The chain is T-complex protein 1 subunit gamma from Caenorhabditis elegans.